Consider the following 280-residue polypeptide: 2-dehydro-3-deoxyphosphooctonate aldolase (280 aa).

This sequence belongs to the KdsA family.

It localises to the cytoplasm. It catalyses the reaction D-arabinose 5-phosphate + phosphoenolpyruvate + H2O = 3-deoxy-alpha-D-manno-2-octulosonate-8-phosphate + phosphate. Its pathway is carbohydrate biosynthesis; 3-deoxy-D-manno-octulosonate biosynthesis; 3-deoxy-D-manno-octulosonate from D-ribulose 5-phosphate: step 2/3. It functions in the pathway bacterial outer membrane biogenesis; lipopolysaccharide biosynthesis. The polypeptide is 2-dehydro-3-deoxyphosphooctonate aldolase (Neisseria meningitidis serogroup B (strain ATCC BAA-335 / MC58)).